The chain runs to 219 residues: Mediator of RNA polymerase II transcription subunit 20 (219 aa).

Belongs to the Mediator complex subunit 20 family. As to quaternary structure, component of the Mediator complex.

It is found in the nucleus. Its function is as follows. Component of the Mediator complex, a coactivator involved in the regulated transcription of nearly all RNA polymerase II-dependent genes. Mediator functions as a bridge to convey information from gene-specific regulatory proteins to the basal RNA polymerase II transcription machinery. Mediator is recruited to promoters by direct interactions with regulatory proteins and serves as a scaffold for the assembly of a functional preinitiation complex with RNA polymerase II and the general transcription factors. The sequence is that of Mediator of RNA polymerase II transcription subunit 20 (MED20) from Aedes aegypti (Yellowfever mosquito).